The chain runs to 394 residues: Cysteine protease ATG4B (394 aa).

The active-site Nucleophile is the Cys-74. Residues Asp-280 and His-282 contribute to the active site. The LIR motif lies at 389 to 392 (FEIL).

This sequence belongs to the peptidase C54 family.

The protein resides in the cytoplasm. It is found in the cytosol. It localises to the cytoplasmic vesicle. Its subcellular location is the autophagosome. The protein localises to the endoplasmic reticulum. The protein resides in the mitochondrion. The enzyme catalyses [protein]-C-terminal L-amino acid-glycyl-phosphatidylethanolamide + H2O = [protein]-C-terminal L-amino acid-glycine + a 1,2-diacyl-sn-glycero-3-phosphoethanolamine. The catalysed reaction is [protein]-C-terminal L-amino acid-glycyl-phosphatidylserine + H2O = [protein]-C-terminal L-amino acid-glycine + a 1,2-diacyl-sn-glycero-3-phospho-L-serine. Functionally, cysteine protease that plays a key role in autophagy by mediating both proteolytic activation and delipidation of ATG8 family proteins. Required for canonical autophagy (macroautophagy), non-canonical autophagy as well as for mitophagy. The protease activity is required for proteolytic activation of ATG8 family proteins: cleaves the C-terminal amino acid of ATG8 proteins to reveal a C-terminal glycine. Exposure of the glycine at the C-terminus is essential for ATG8 proteins conjugation to phosphatidylethanolamine (PE) and insertion to membranes, which is necessary for autophagy. Protease activity is also required to counteract formation of high-molecular weight conjugates of ATG8 proteins (ATG8ylation): acts as a deubiquitinating-like enzyme that removes ATG8 conjugated to other proteins, such as ATG3. In addition to the protease activity, also mediates delipidation of ATG8 family proteins. Catalyzes delipidation of PE-conjugated forms of ATG8 proteins during macroautophagy. Also involved in non-canonical autophagy, a parallel pathway involving conjugation of ATG8 proteins to single membranes at endolysosomal compartments, by catalyzing delipidation of ATG8 proteins conjugated to phosphatidylserine (PS). The polypeptide is Cysteine protease ATG4B (Danio rerio (Zebrafish)).